We begin with the raw amino-acid sequence, 319 residues long: MAEVNISYVSEFILKGITDRPELQAPCFVMFLTIYLVTVLGNLGLIVIIRVDSRLHTPMYFFLSHLAFVDLCYSSAITPKMMVNFVVERNTIPFHACATQLGCFLTFMITECFLLASMAYDRYVAICSPLHYSTLMSKRVCIQLVAVPYVYSFLVALFHTIITFRLTYCGPNVINHFYCDDLPLLALSCSDTHMKEILIFAFAGFDMICSSSIVLTSYLFIIAAILRIRSTQGRRKAISTCGSHMVAVTIFYGTLIFMYLQPKSNHSLDTDKMASVFYTVVIPMLNPLIYSLRNKEVKDASKKALDKGYETLKILRLSK.

The Extracellular portion of the chain corresponds to methionine 1 to alanine 25. A glycan (N-linked (GlcNAc...) asparagine) is linked at asparagine 5. Residues proline 26–isoleucine 46 traverse the membrane as a helical segment. The Cytoplasmic segment spans residues valine 47 to arginine 54. Residues leucine 55–serine 75 traverse the membrane as a helical segment. Residues alanine 76 to threonine 99 lie on the Extracellular side of the membrane. Cysteine 97 and cysteine 189 are joined by a disulfide. The helical transmembrane segment at glutamine 100–tyrosine 120 threads the bilayer. Residues aspartate 121–serine 133 are Cytoplasmic-facing. The chain crosses the membrane as a helical span at residues threonine 134 to leucine 154. The Extracellular segment spans residues valine 155–glutamate 196. Residues isoleucine 197–serine 217 form a helical membrane-spanning segment. Residues tyrosine 218–alanine 237 lie on the Cytoplasmic side of the membrane. A helical transmembrane segment spans residues isoleucine 238–methionine 258. Over tyrosine 259–aspartate 271 the chain is Extracellular. A glycan (N-linked (GlcNAc...) asparagine) is linked at asparagine 265. A helical membrane pass occupies residues lysine 272–leucine 292. Over arginine 293–lysine 319 the chain is Cytoplasmic.

This sequence belongs to the G-protein coupled receptor 1 family.

It is found in the cell membrane. Potential odorant receptor. This Mus musculus (Mouse) protein is Olfactory receptor 8U3.